The sequence spans 298 residues: ATP synthase gamma chain (298 aa).

This sequence belongs to the ATPase gamma chain family. In terms of assembly, F-type ATPases have 2 components, CF(1) - the catalytic core - and CF(0) - the membrane proton channel. CF(1) has five subunits: alpha(3), beta(3), gamma(1), delta(1), epsilon(1). CF(0) has three main subunits: a, b and c.

It localises to the cell inner membrane. Produces ATP from ADP in the presence of a proton gradient across the membrane. The gamma chain is believed to be important in regulating ATPase activity and the flow of protons through the CF(0) complex. The polypeptide is ATP synthase gamma chain (Francisella tularensis subsp. tularensis (strain WY96-3418)).